A 261-amino-acid chain; its full sequence is Putative diacylated glycolipid transporter LprF (261 aa).

A signal peptide spans 1–38; sequence MNGLISQACGSHRPRRPSSLGAVAILIAATLFATVVAG. A lipid anchor (N-palmitoyl cysteine) is attached at cysteine 39. Cysteine 39 is lipidated: S-diacylglycerol cysteine. Residues 42-61 form a disordered region; sequence KPTTASSPSPGSPSPEAQQI.

Belongs to the LppX/LprAFG lipoprotein family. In terms of assembly, monomer. Post-translationally, modified by Lgt on Cys-39 with an S-linked diacylglycerol with a mixture of C16, C18 and C19 fatty acids (palmitic, stearic and tuberculostearic acid respectively), signal peptide is removed by LspA, modified by Lnt with an amide-linked mixture of C16 and C19 fatty acids.

It localises to the cell membrane. Might be involved in transporting short diacylated glycolipids to the cell outer membrane. Binds glycolipids that contain a diacylated glycerophosphate or a diacylated phosphatidylinositol moiety with C14 and C16 chains (upon overexpression in M.smegmatis; M.smegmatis does not encode this gene). Overexpression in M.smegmatis increases the cell wall glycolipid LAM/LM ratio (lipoarabinomannan/lipomannan), suggesting perhaps this protein is involved in the preferential translocation of diacylated LAM to the outer cell membrane. Overexpressing M.smegmatis cells adhere less well to hexadecane droplets, indicating decrease in the hydrophobicity of the cell surface, and have a slightly increased resistance to the antibiotic ethambutol. This is Putative diacylated glycolipid transporter LprF (lprF) from Mycobacterium bovis (strain ATCC BAA-935 / AF2122/97).